A 464-amino-acid polypeptide reads, in one-letter code: Argininosuccinate lyase 2 (464 aa).

Belongs to the lyase 1 family. Argininosuccinate lyase subfamily.

Its subcellular location is the cytoplasm. The enzyme catalyses 2-(N(omega)-L-arginino)succinate = fumarate + L-arginine. Its pathway is amino-acid biosynthesis; L-arginine biosynthesis; L-arginine from L-ornithine and carbamoyl phosphate: step 3/3. The polypeptide is Argininosuccinate lyase 2 (Pseudomonas fluorescens (strain Pf0-1)).